The sequence spans 388 residues: Bifunctional enzyme IspD/IspF (388 aa).

Residues M1 to R228 are 2-C-methyl-D-erythritol 4-phosphate cytidylyltransferase. The 2-C-methyl-D-erythritol 2,4-cyclodiphosphate synthase stretch occupies residues R228–A388. D234 and H236 together coordinate a divalent metal cation. 4-CDP-2-C-methyl-D-erythritol 2-phosphate-binding positions include D234–H236 and H260–S261. Residue H268 participates in a divalent metal cation binding. 4-CDP-2-C-methyl-D-erythritol 2-phosphate-binding positions include D282–G284, T358–E361, F365, and R368.

This sequence in the N-terminal section; belongs to the IspD/TarI cytidylyltransferase family. IspD subfamily. The protein in the C-terminal section; belongs to the IspF family. The cofactor is a divalent metal cation.

The enzyme catalyses 2-C-methyl-D-erythritol 4-phosphate + CTP + H(+) = 4-CDP-2-C-methyl-D-erythritol + diphosphate. It carries out the reaction 4-CDP-2-C-methyl-D-erythritol 2-phosphate = 2-C-methyl-D-erythritol 2,4-cyclic diphosphate + CMP. Its pathway is isoprenoid biosynthesis; isopentenyl diphosphate biosynthesis via DXP pathway; isopentenyl diphosphate from 1-deoxy-D-xylulose 5-phosphate: step 2/6. It functions in the pathway isoprenoid biosynthesis; isopentenyl diphosphate biosynthesis via DXP pathway; isopentenyl diphosphate from 1-deoxy-D-xylulose 5-phosphate: step 4/6. In terms of biological role, bifunctional enzyme that catalyzes the formation of 4-diphosphocytidyl-2-C-methyl-D-erythritol from CTP and 2-C-methyl-D-erythritol 4-phosphate (MEP) (IspD), and catalyzes the conversion of 4-diphosphocytidyl-2-C-methyl-D-erythritol 2-phosphate (CDP-ME2P) to 2-C-methyl-D-erythritol 2,4-cyclodiphosphate (ME-CPP) with a corresponding release of cytidine 5-monophosphate (CMP) (IspF). This Gluconobacter oxydans (strain 621H) (Gluconobacter suboxydans) protein is Bifunctional enzyme IspD/IspF.